The following is a 188-amino-acid chain: Elongation factor P (188 aa).

Belongs to the elongation factor P family.

Its subcellular location is the cytoplasm. The protein operates within protein biosynthesis; polypeptide chain elongation. Its function is as follows. Involved in peptide bond synthesis. Stimulates efficient translation and peptide-bond synthesis on native or reconstituted 70S ribosomes in vitro. Probably functions indirectly by altering the affinity of the ribosome for aminoacyl-tRNA, thus increasing their reactivity as acceptors for peptidyl transferase. In Phenylobacterium zucineum (strain HLK1), this protein is Elongation factor P.